Consider the following 62-residue polypeptide: MAVPKRKPSVSRRKIRNVFIRAEMKKNLSNYSICKHCNYVKKKHHICNNCGYYKESLIYKIV.

Belongs to the bacterial ribosomal protein bL32 family.

The protein resides in the mitochondrion. The chain is Large ribosomal subunit protein bL32m (RPL32) from Reclinomonas americana.